A 255-amino-acid chain; its full sequence is Pimeloyl-[acyl-carrier protein] methyl ester esterase (255 aa).

In terms of domain architecture, AB hydrolase-1 spans 16–242 (LVLLHGWGLN…AAHAPFISHP (227 aa)). Residues tryptophan 22, 82–83 (SL), and 143–147 (FLALQ) contribute to the substrate site. Serine 82 acts as the Nucleophile in catalysis. Active-site residues include aspartate 207 and histidine 235. Histidine 235 contributes to the substrate binding site.

Belongs to the AB hydrolase superfamily. Carboxylesterase BioH family. As to quaternary structure, monomer.

Its subcellular location is the cytoplasm. The catalysed reaction is 6-carboxyhexanoyl-[ACP] methyl ester + H2O = 6-carboxyhexanoyl-[ACP] + methanol + H(+). It functions in the pathway cofactor biosynthesis; biotin biosynthesis. Its function is as follows. The physiological role of BioH is to remove the methyl group introduced by BioC when the pimeloyl moiety is complete. It allows to synthesize pimeloyl-ACP via the fatty acid synthetic pathway through the hydrolysis of the ester bonds of pimeloyl-ACP esters. The sequence is that of Pimeloyl-[acyl-carrier protein] methyl ester esterase from Pectobacterium carotovorum subsp. carotovorum (strain PC1).